The primary structure comprises 524 residues: MKNSIFKNKYNSTQYNLNSSVDIVLVGAGIMSVTLGSFLTILEPSWIIHIYERLNKPAQESSNSWNNAGTGHAAFCELNYTKYNKINDSIDITKALSINTAFELSLQFWAFLTKNGIINNPKSFINNIPHISFVWGQKNINFLKKRFQTLQTHNLFHGMIYSEDPHQIKSWIPLVMTGRNNNQKVAATYMPMGTDINFEEITTQLLAQLKKNPNFNIYLEHDVTHIERHNNKYWKISVQDIQHKKTIHTYTKYVFIGAGGKSLNLLQTANIQSVSGYAGFPVGGQFLVTYNPEIVSQHQAKVYGKANVSMPPMSVPHIDTRILNNKKVLLFGPFATFSSKFLKYGSWLDLFHSLNKHNLKPIIQAGIDNFPLIKYLFNQLIMSNHDRINALKEYYPEVNSKDWFLIQAGQRVQIIKKNNKNRGILQFGTEIVSSADGSLSALLGASPGASISVSITIKLLNIMFQNKYYNDLWKTKLIEIVPSYINPTLNNYHSDFMKQIRKNTRNILKLIYIEKENRSLIFKK.

Belongs to the MQO family. Requires FAD as cofactor.

It carries out the reaction (S)-malate + a quinone = a quinol + oxaloacetate. Its pathway is carbohydrate metabolism; tricarboxylic acid cycle; oxaloacetate from (S)-malate (quinone route): step 1/1. This chain is Probable malate:quinone oxidoreductase, found in Blochmanniella floridana.